We begin with the raw amino-acid sequence, 298 residues long: Mitochondrial dicarboxylate transporter (298 aa).

Solcar repeat units lie at residues 11–95 (KNIK…LKEN), 103–195 (TNMA…FKNY), and 205–289 (SKNY…LKKH). Transmembrane regions (helical) follow at residues 17 to 37 (WWYGGAAGIFATMVTHPLDLA), 58 to 76 (ILANEGVVGLYSGLSAAVL), 105 to 126 (MAYLLPCSMFSGAIGGLAGNFA), 170 to 189 (GWKPNMVRGILMTASQVVTY), 211 to 231 (LTASLLAGLVATTVCSPADVM), and 265 to 283 (WLPSFTRLGPFTMLIFFAI).

Belongs to the mitochondrial carrier (TC 2.A.29) family. In terms of assembly, homodimer. Binds to the TIM22 translocation complex during import.

Its subcellular location is the mitochondrion inner membrane. Functionally, mitochondrial dicarboxylic transporter catalyzing the exchange of dicarboxylic acids like malate and succinate for inorganic phosphate. Required for growth on ethanol and acetate. The polypeptide is Mitochondrial dicarboxylate transporter (DIC1) (Saccharomyces cerevisiae (strain ATCC 204508 / S288c) (Baker's yeast)).